The following is a 235-amino-acid chain: Carboxy-S-adenosyl-L-methionine synthase (235 aa).

Residues Tyr35, 60-62 (GCS), 83-84 (DN), Asn124, and Arg191 contribute to the S-adenosyl-L-methionine site.

It belongs to the class I-like SAM-binding methyltransferase superfamily. Cx-SAM synthase family. As to quaternary structure, homodimer.

It catalyses the reaction prephenate + S-adenosyl-L-methionine = carboxy-S-adenosyl-L-methionine + 3-phenylpyruvate + H2O. Functionally, catalyzes the conversion of S-adenosyl-L-methionine (SAM) to carboxy-S-adenosyl-L-methionine (Cx-SAM). The sequence is that of Carboxy-S-adenosyl-L-methionine synthase from Campylobacter jejuni subsp. jejuni serotype O:23/36 (strain 81-176).